The primary structure comprises 475 residues: Transmembrane protein 181 (475 aa).

9 helical membrane passes run 16 to 36 (HFVL…FVGI), 131 to 151 (EIIV…IVGF), 175 to 195 (LEIW…CLFA), 214 to 234 (SVLL…SFLV), 245 to 265 (LFQS…YHGI), 276 to 296 (FYLP…TLGI), 320 to 340 (MKVF…FLIV), 356 to 376 (LKFL…ILYL), and 401 to 421 (FLSF…VYSP). The residue at position 443 (serine 443) is a Phosphoserine.

It belongs to the TMEM181 family. As to quaternary structure, interacts with cytolethal distending toxin.

It is found in the membrane. Its function is as follows. Mediates action of cytolethal distending toxins (CDT), which are secreted by many pathogenic bacteria. Expression level of TMEM181 is rate-limiting for intoxication. The sequence is that of Transmembrane protein 181 (TMEM181) from Homo sapiens (Human).